A 1003-amino-acid polypeptide reads, in one-letter code: Leucine-rich repeat receptor-like serine/threonine-protein kinase BAM1 (1003 aa).

The first 19 residues, 1-19 (MKLFLLLLFLLHISHTFTA), serve as a signal peptide directing secretion. Topologically, residues 20-640 (SRPISEFRAL…HSKGPLSASM (621 aa)) are extracellular. 22 LRR repeats span residues 68–92 (RRHVTSLDLSGLNLSGTLSPDVSHL), 93–116 (RLLQNLSLAENLISGPIPPEISSL), 117–140 (SGLRHLNLSNNVFNGSFPDEISSG), 142–165 (VNLRVLDVYNNNLTGDLPVSVTNL), 166–191 (TQLRHLHLGGNYFAGKIPPSYGSWPV), 193–213 (EYLAVSGNELVGKIPPEIGNL), 215–238 (TLRELYIGYYNAFEDGLPPEIGNL), 239–262 (SELVRFDGANCGLTGEIPPEIGKL), 263–285 (QKLDTLFLQVNVFSGPLTWELGT), 286–310 (LSSLKSMDLSNNMFTGEIPASFAEL), 312–334 (NLTLLNLFRNKLHGEIPEFIGDL), 335–358 (PELEVLQLWENNFTGSIPQKLGEN), 359–382 (GKLNLVDLSSNKLTGTLPPNMCSG), 385–406 (LETLITLGNFLFGSIPDSLGKC), 407–430 (ESLTRIRMGENFLNGSIPKGLFGL), 432–454 (KLTQVELQDNYLSGELPVAGGVS), 455–480 (VNLGQISLSNNQLSGPLPPAIGNFTG), 482–502 (QKLLLDGNKFQGPIPSEVGKL), 503–526 (QQLSKIDFSHNLFSGRIAPEISRC), 527–550 (KLLTFVDLSRNELSGEIPNEITAM), 551–574 (KILNYLNLSRNHLVGSIPGSISSM), and 575–598 (QSLTSLDFSYNNLSGLVPGTGQFS). 6 N-linked (GlcNAc...) asparagine glycosylation sites follow: Asn80, Asn97, Asn123, Asn130, Asn153, and Asn164. N-linked (GlcNAc...) asparagine glycans are attached at residues Asn212 and Asn237. Residues Asn312 and Asn346 are each glycosylated (N-linked (GlcNAc...) asparagine). Residue Asn420 is glycosylated (N-linked (GlcNAc...) asparagine). N-linked (GlcNAc...) asparagine glycosylation is present at Asn477. Asn557, Asn586, and Asn601 each carry an N-linked (GlcNAc...) asparagine glycan. A helical transmembrane segment spans residues 641–661 (KLLLVLGLLVCSIAFAVVAII). Topologically, residues 662-1003 (KARSLKKASE…VQSPPDLLNL (342 aa)) are cytoplasmic. At Thr686 the chain carries Phosphothreonine. The 278-residue stretch at 694 to 971 (LKEDNIIGKG…VQILTEIPKL (278 aa)) folds into the Protein kinase domain. ATP is bound by residues 700–708 (IGKGGAGIV) and Lys722. Phosphotyrosine occurs at positions 769 and 807. The active-site Proton acceptor is the Asp820. At Ser855 the chain carries Phosphoserine. Residues Tyr863 and Tyr870 each carry the phosphotyrosine modification. The residue at position 871 (Thr871) is a Phosphothreonine. The interval 969 to 1003 (PKLPPSKDQPMTESAPESELSPKSGVQSPPDLLNL) is disordered. Ser996 is subject to Phosphoserine.

The protein belongs to the protein kinase superfamily. Ser/Thr protein kinase family. In terms of assembly, self-interacts and interacts with BAM2 and CLV1. Binds to the CLV3, CLE5, CLE11, CLE18, CLE19, CLE22, CLE25, CLE26, CLE40, CLE41 and CLE42 mature peptides, probably via its extracellular leucine-rich repeat region. As to expression, expressed in seedlings, roots, leaves, inflorescences, flowers and siliques.

It is found in the cell membrane. The enzyme catalyses L-seryl-[protein] + ATP = O-phospho-L-seryl-[protein] + ADP + H(+). The catalysed reaction is L-threonyl-[protein] + ATP = O-phospho-L-threonyl-[protein] + ADP + H(+). Necessary for male gametophyte development, as well as ovule specification and function. Involved in cell-cell communication process required during early anther development, and regulating cell division and differentiation to organize cell layers. Required for the development of high-ordered vascular strands within the leaf and a correlated control of leaf shape, size and symmetry. May regulate the CLV1-dependent CLV3-mediated signaling in meristems maintenance. The protein is Leucine-rich repeat receptor-like serine/threonine-protein kinase BAM1 (BAM1) of Arabidopsis thaliana (Mouse-ear cress).